Reading from the N-terminus, the 175-residue chain is Sec-independent protein translocase protein TatB (175 aa).

Residues 1 to 21 traverse the membrane as a helical segment; that stretch reads MLDLGLSKMALIGVVALVVLG. Positions 96-115 are enriched in low complexity; the sequence is VSPGGSAAADAPDGPSAASG. Disordered stretches follow at residues 96–119 and 152–175; these read VSPG…EPSW and QVQS…ARFL. Residues 160–175 are compositionally biased toward basic residues; sequence VARHRPASLRRPARFL.

This sequence belongs to the TatB family. The Tat system comprises two distinct complexes: a TatABC complex, containing multiple copies of TatA, TatB and TatC subunits, and a separate TatA complex, containing only TatA subunits. Substrates initially bind to the TatABC complex, which probably triggers association of the separate TatA complex to form the active translocon.

The protein localises to the cell inner membrane. Functionally, part of the twin-arginine translocation (Tat) system that transports large folded proteins containing a characteristic twin-arginine motif in their signal peptide across membranes. Together with TatC, TatB is part of a receptor directly interacting with Tat signal peptides. TatB may form an oligomeric binding site that transiently accommodates folded Tat precursor proteins before their translocation. In Burkholderia pseudomallei (strain 1710b), this protein is Sec-independent protein translocase protein TatB.